A 314-amino-acid chain; its full sequence is Thymidylate synthase (314 aa).

DUMP contacts are provided by residues arginine 21 and 176 to 177; that span reads RR. Cysteine 196 functions as the Nucleophile in the catalytic mechanism. Residues 216 to 219, asparagine 227, and 257 to 259 each bind dUMP; these read RSAD and HLY. Aspartate 219 contributes to the (6R)-5,10-methylene-5,6,7,8-tetrahydrofolate binding site. Serine 313 is a (6R)-5,10-methylene-5,6,7,8-tetrahydrofolate binding site.

It belongs to the thymidylate synthase family. Bacterial-type ThyA subfamily. Homodimer.

The protein localises to the cytoplasm. The enzyme catalyses dUMP + (6R)-5,10-methylene-5,6,7,8-tetrahydrofolate = 7,8-dihydrofolate + dTMP. Its pathway is pyrimidine metabolism; dTTP biosynthesis. Catalyzes the reductive methylation of 2'-deoxyuridine-5'-monophosphate (dUMP) to 2'-deoxythymidine-5'-monophosphate (dTMP) while utilizing 5,10-methylenetetrahydrofolate (mTHF) as the methyl donor and reductant in the reaction, yielding dihydrofolate (DHF) as a by-product. This enzymatic reaction provides an intracellular de novo source of dTMP, an essential precursor for DNA biosynthesis. The sequence is that of Thymidylate synthase from Listeria monocytogenes serotype 4b (strain F2365).